An 858-amino-acid chain; its full sequence is Low-density lipoprotein receptor-related protein 12 (858 aa).

The signal sequence occupies residues 1-32; the sequence is MARRWSTKESQRRGSAWLLLFLAGVYGNGALA. The Extracellular portion of the chain corresponds to 33-492; it reads ELSENVHISG…ENCPVIVPTR (460 aa). 9 disulfide bridges follow: Cys-47-Cys-76, Cys-103-Cys-122, Cys-166-Cys-178, Cys-173-Cys-191, Cys-185-Cys-200, Cys-215-Cys-232, Cys-222-Cys-245, Cys-239-Cys-254, and Cys-259-Cys-285. Residues 47 to 159 enclose the CUB 1 domain; it reads CGESPEQIRA…KGFRLAYFSG (113 aa). The N-linked (GlcNAc...) asparagine glycan is linked to Asn-75. 2 consecutive LDL-receptor class A domains span residues 165–201 and 214–255; these read DCAC…EVCA and PCAY…IDCD. One can recognise a CUB 2 domain in the interval 259–372; that stretch reads CGQWLKYFYG…RGFNATYQVD (114 aa). N-linked (GlcNAc...) asparagine glycosylation is found at Asn-284 and Asn-366. 3 consecutive LDL-receptor class A domains span residues 374–411, 412–449, and 450–486; these read FCLP…INCT, MCQK…KNCF, and FCQP…ENCP. Intrachain disulfides connect Cys-375–Cys-388, Cys-382–Cys-401, Cys-395–Cys-410, Cys-413–Cys-426, Cys-420–Cys-439, Cys-433–Cys-448, Cys-451–Cys-463, Cys-458–Cys-476, and Cys-470–Cys-485. N-linked (GlcNAc...) asparagine glycosylation is present at Asn-409. Residue Asn-441 is glycosylated (N-linked (GlcNAc...) asparagine). A helical membrane pass occupies residues 493–513; the sequence is VITAAVIGSLICGLLLVIALG. Over 514 to 858 the chain is Cytoplasmic; that stretch reads CTCKLYSLRM…TSDDEALLLC (345 aa). 2 disordered regions span residues 619–721 and 746–767; these read ALVS…VSPA and SSST…SGRE. Over residues 712–721 the composition is skewed to low complexity; sequence SVEAPSVSPA. Residues 746–755 show a composition bias toward polar residues; that stretch reads SSSTTQNRSP.

The protein belongs to the LDLR family. In terms of assembly, may interact with RACK1, ZFYVE9 and NMRK2.

It localises to the membrane. It is found in the coated pit. Probable receptor, which may be involved in the internalization of lipophilic molecules and/or signal transduction. May act as a tumor suppressor. The sequence is that of Low-density lipoprotein receptor-related protein 12 (Lrp12) from Mus musculus (Mouse).